The primary structure comprises 40 residues: Trypsin inhibitor (40 aa).

As to quaternary structure, monomer.

It carries out the reaction Preferential cleavage: Arg-|-Xaa, Lys-|-Xaa.. Its function is as follows. Inhibits trypsin but not chymotrypsin, papain or porcine pancreatic alpha-amylase. Has insecticidal activity against A.aegypti. Functions by inhibiting the A.aegypti midgut proteases to reduce the survival of larva and adults. The protein is Trypsin inhibitor of Cassia leiandra (Marimari).